The following is a 363-amino-acid chain: Type-2 angiotensin II receptor (363 aa).

Residues 1-45 (MKDNFSFAATSRNITSSLPFVNLNMSGTNDLIFNCSHKPSDKHLE) lie on the Extracellular side of the membrane. 4 N-linked (GlcNAc...) asparagine glycosylation sites follow: Asn-4, Asn-13, Asn-24, and Asn-34. 2 disulfide bridges follow: Cys-35-Cys-290 and Cys-117-Cys-195. The helical transmembrane segment at 46 to 70 (AIPVLYYLIFVIGFAVNIIVVSLFC) threads the bilayer. The Cytoplasmic portion of the chain corresponds to 71–80 (CQKGPKKVSS). Residues 81–104 (IYIFNLAVADLLLLATLPLWATYY) traverse the membrane as a helical segment. Angiotensin II-binding residues include Tyr-103 and Tyr-104. Residues 105–114 (SYRYDWLFGP) are Extracellular-facing. The helical transmembrane segment at 115-140 (VMCKVFGSFLTLNMFASIFFITCMSV) threads the bilayer. Residues 141–159 (DRYQSVIYPFLSQRRNPWQ) lie on the Cytoplasmic side of the membrane. Residues 160 to 181 (ASYVVPLVWCMACLSSLPTFYF) traverse the membrane as a helical segment. Residues Arg-182, Tyr-204, and Lys-215 each contribute to the angiotensin II site. Topologically, residues 182 to 206 (RDVRTIEYLGVNACVMAFPPEKYAQ) are extracellular. Residues 207–232 (WSAGIALMKNVLGFIIPLIFIATCYF) form a helical membrane-spanning segment. At 233-257 (GIRKHLLKTNSYGKNRITRDQVLKM) the chain is on the cytoplasmic side. Residues 258–281 (AAAVVLAFIICWLPFHVLTFLDAL) form a helical membrane-spanning segment. Residue Asp-279 coordinates angiotensin II. At 282–294 (SWMGIINSCEVMA) the chain is on the extracellular side. A helical transmembrane segment spans residues 295–320 (VIDLALPFAILLGFTNSCVNPFLYCF). Residue Asp-297 coordinates angiotensin II. At 321 to 363 (VGNRFQQKLRSMFRVPITWLQGKRETMSCRKSSSLREMDTFVS) the chain is on the cytoplasmic side. The helix VIII stretch occupies residues 324-333 (RFQQKLRSMF). Residue Ser-354 is modified to Phosphoserine; by PKC.

It belongs to the G-protein coupled receptor 1 family. Interacts with MTUS1.

It localises to the cell membrane. Functionally, receptor for angiotensin II, a vasoconstricting peptide. Signals primarily via a non-canonical G-protein- and beta-arrestin independent pathways. Cooperates with MTUS1 to inhibit ERK2 activation and cell proliferation. The chain is Type-2 angiotensin II receptor (AGTR2) from Meriones unguiculatus (Mongolian jird).